The chain runs to 206 residues: Probable glutathione peroxidase 3, mitochondrial (206 aa).

The transit peptide at 1 to 12 directs the protein to the mitochondrion; that stretch reads MPRSSRWVNQRA. C80 is an active-site residue.

It belongs to the glutathione peroxidase family. As to quaternary structure, interacts with ABI1 and ABI2. Ubiquitous.

It is found in the mitochondrion. The catalysed reaction is 2 glutathione + H2O2 = glutathione disulfide + 2 H2O. The redox states are modulated by H(2)O(2). In terms of biological role, may constitute a glutathione peroxidase-like protective system against oxidative stresses. Involved positively in abscisic acid (ABA) signaling pathway that regulates numerous ABA responses, such as stomatal closure, seed germination and inhibition of vegetative growth. Oxidizes and represses target proteins (e.g. the phosphatase activity of ABI1 and ABI2) when oxidized by H(2)O(2), probably after ABA signaling. Modulates the calcium channel activity in guard cells in response to ABA or H(2)O(2). Confers tolerance to drought stress, by enhancing the ABA-dependent stomatal closure. The polypeptide is Probable glutathione peroxidase 3, mitochondrial (GPX3) (Arabidopsis thaliana (Mouse-ear cress)).